A 391-amino-acid chain; its full sequence is Arginine biosynthesis bifunctional protein ArgJ 2 (391 aa).

Substrate contacts are provided by lysine 167 and serine 180. The Nucleophile role is filled by serine 180.

It belongs to the ArgJ family. In terms of assembly, heterotetramer of two alpha and two beta chains.

The protein resides in the cytoplasm. It catalyses the reaction N(2)-acetyl-L-ornithine + L-glutamate = N-acetyl-L-glutamate + L-ornithine. The catalysed reaction is L-glutamate + acetyl-CoA = N-acetyl-L-glutamate + CoA + H(+). Its pathway is amino-acid biosynthesis; L-arginine biosynthesis; L-ornithine and N-acetyl-L-glutamate from L-glutamate and N(2)-acetyl-L-ornithine (cyclic): step 1/1. It functions in the pathway amino-acid biosynthesis; L-arginine biosynthesis; N(2)-acetyl-L-ornithine from L-glutamate: step 1/4. Catalyzes two activities which are involved in the cyclic version of arginine biosynthesis: the synthesis of N-acetylglutamate from glutamate and acetyl-CoA as the acetyl donor, and of ornithine by transacetylation between N(2)-acetylornithine and glutamate. This chain is Arginine biosynthesis bifunctional protein ArgJ 2, found in Streptomyces clavuligerus.